Consider the following 301-residue polypeptide: Fatty acid elongase 3 (301 aa).

The next 7 helical transmembrane spans lie at Val31–Met51, Ile64–Tyr84, Ala122–Leu142, Val161–Val181, Gly187–Val207, Phe219–Cys239, and Phe257–Phe277. Residues His165 to His169 carry the HxxHH motif motif. His168 functions as the Nucleophile in the catalytic mechanism.

This sequence belongs to the ELO family.

It localises to the endoplasmic reticulum membrane. The catalysed reaction is an acyl-CoA + malonyl-CoA + H(+) = a 3-oxoacyl-CoA + CO2 + CoA. Its pathway is lipid metabolism; fatty acid biosynthesis. Involved in the synthesis of fatty acids. Elongates C14 fatty acids to C18. The chain is Fatty acid elongase 3 from Trypanosoma brucei brucei (strain 927/4 GUTat10.1).